A 70-amino-acid chain; its full sequence is Small, acid-soluble spore protein I (70 aa).

Belongs to the SspI family.

The protein resides in the spore core. The polypeptide is Small, acid-soluble spore protein I (Bacillus cytotoxicus (strain DSM 22905 / CIP 110041 / 391-98 / NVH 391-98)).